The sequence spans 1084 residues: Myosin heavy chain, skeletal muscle (1084 aa).

3 disordered regions span residues 1–20, 270–292, and 298–317; these read SAET…KTKE, EIEA…SREL, and RLEE…KKRE. The tract at residues 1 to 258 is alpha-helical tailpiece (S2); it reads SAETEKEMAN…SKIEDEQALM (258 aa). Residues 259–1084 are rodlike tail (S2 and LMM domains); that stretch reads TNLQRIEELE…DVHSKVISEE (826 aa). Over residues 273–292 the composition is skewed to basic and acidic residues; the sequence is AERASRAKAEKQRSDLSREL. A coiled-coil region spans residues 455–1084; it reads QAFTQQIEGL…DVHSKVISEE (630 aa).

As to quaternary structure, muscle myosin is a hexameric protein that consists of 2 heavy chain subunits (MHC), 2 alkali light chain subunits (MLC) and 2 regulatory light chain subunits (MLC-2).

The protein localises to the cytoplasm. Its subcellular location is the myofibril. In terms of biological role, muscle contraction. The polypeptide is Myosin heavy chain, skeletal muscle (Oryctolagus cuniculus (Rabbit)).